Here is a 104-residue protein sequence, read N- to C-terminus: MDLFKMLGQFKDMQGRMQTMQEEMSQRTFSALAGGGLVTADVDGKMQLKRIKLDASVVNPGDIEMLEDLIVVAVAEAQKKAADAMQMELQKVTGGIDLPFKLPF.

This sequence belongs to the YbaB/EbfC family. Homodimer.

The protein localises to the cytoplasm. Its subcellular location is the nucleoid. In terms of biological role, binds to DNA and alters its conformation. May be involved in regulation of gene expression, nucleoid organization and DNA protection. This Gemmatimonas aurantiaca (strain DSM 14586 / JCM 11422 / NBRC 100505 / T-27) protein is Nucleoid-associated protein GAU_1113.